We begin with the raw amino-acid sequence, 160 residues long: Phosphopantetheine adenylyltransferase (160 aa).

Ser-9 contributes to the substrate binding site. Residues 9–10 (SF) and His-17 each bind ATP. Substrate contacts are provided by Lys-41, Ile-73, and Lys-87. ATP-binding positions include 88–90 (GLR), Glu-98, and 122–128 (YSFVSSS).

The protein belongs to the bacterial CoaD family. As to quaternary structure, homohexamer. The cofactor is Mg(2+).

Its subcellular location is the cytoplasm. The catalysed reaction is (R)-4'-phosphopantetheine + ATP + H(+) = 3'-dephospho-CoA + diphosphate. The protein operates within cofactor biosynthesis; coenzyme A biosynthesis; CoA from (R)-pantothenate: step 4/5. Reversibly transfers an adenylyl group from ATP to 4'-phosphopantetheine, yielding dephospho-CoA (dPCoA) and pyrophosphate. This chain is Phosphopantetheine adenylyltransferase, found in Mycolicibacterium vanbaalenii (strain DSM 7251 / JCM 13017 / BCRC 16820 / KCTC 9966 / NRRL B-24157 / PYR-1) (Mycobacterium vanbaalenii).